We begin with the raw amino-acid sequence, 296 residues long: tRNA dimethylallyltransferase (296 aa).

2-9 contacts ATP; that stretch reads GPTASGKT. 4–9 lines the substrate pocket; the sequence is TASGKT. Interaction with substrate tRNA regions lie at residues 27-30, 151-155, and 232-237; these read DSAL, QRLSR, and RCVGYR.

The protein belongs to the IPP transferase family. Monomer. The cofactor is Mg(2+).

It catalyses the reaction adenosine(37) in tRNA + dimethylallyl diphosphate = N(6)-dimethylallyladenosine(37) in tRNA + diphosphate. Functionally, catalyzes the transfer of a dimethylallyl group onto the adenine at position 37 in tRNAs that read codons beginning with uridine, leading to the formation of N6-(dimethylallyl)adenosine (i(6)A). This is tRNA dimethylallyltransferase from Shewanella sp. (strain MR-4).